A 397-amino-acid chain; its full sequence is Phosphoglycerate kinase (397 aa).

Residues 26–28 (DLN), arginine 42, 65–68 (HLGR), arginine 119, and arginine 152 each bind substrate. Residues lysine 203, glutamate 325, and 351–354 (GGDT) contribute to the ATP site.

Belongs to the phosphoglycerate kinase family. As to quaternary structure, monomer.

It is found in the cytoplasm. It catalyses the reaction (2R)-3-phosphoglycerate + ATP = (2R)-3-phospho-glyceroyl phosphate + ADP. It functions in the pathway carbohydrate degradation; glycolysis; pyruvate from D-glyceraldehyde 3-phosphate: step 2/5. The polypeptide is Phosphoglycerate kinase (Bordetella bronchiseptica (strain ATCC BAA-588 / NCTC 13252 / RB50) (Alcaligenes bronchisepticus)).